An 845-amino-acid chain; its full sequence is AdoMet-dependent rRNA methyltransferase SPB1 (845 aa).

S-adenosyl-L-methionine contacts are provided by Gly-58, Trp-60, Asp-78, Asp-94, and Asp-119. The active-site Proton acceptor is Lys-159. Disordered regions lie at residues 223–247 and 279–298; these read GGGN…SQRQ and SLNK…DDDH. 2 coiled-coil regions span residues 366-402 and 464-502; these read TEEQ…KEII and DEEE…ERDA. Residues 496–512 are compositionally biased toward basic and acidic residues; that stretch reads RKAERDANYRAKQARGD. Disordered regions lie at residues 496–546, 587–660, and 788–821; these read RKAE…DDDE, ENKT…HQQK, and KLNK…VKGK. Composition is skewed to acidic residues over residues 513 to 528, 536 to 545, 610 to 624, and 633 to 648; these read ADDE…NDDV, MESESDDDDD, NEND…ESDF, and DDDD…DDEV. Residues 739–796 are a coiled coil; sequence IKKVLEAQSRKKLRALKRLEKIKKKSDLINEDSGKSERDKADEISKLMKKLNKKQKQK. Residues 788 to 797 show a composition bias toward basic residues; it reads KLNKKQKQKP.

It belongs to the class I-like SAM-binding methyltransferase superfamily. RNA methyltransferase RlmE family. SPB1 subfamily. As to quaternary structure, component of the nucleolar and nucleoplasmic pre-60S ribosomal particle.

It is found in the nucleus. The protein localises to the nucleolus. It catalyses the reaction a ribonucleotide in rRNA + S-adenosyl-L-methionine = a 2'-O-methylribonucleotide in rRNA + S-adenosyl-L-homocysteine + H(+). Functionally, required for proper assembly of pre-ribosomal particles during the biogenesis of the 60S ribosomal subunit. The sequence is that of AdoMet-dependent rRNA methyltransferase SPB1 from Candida albicans (strain SC5314 / ATCC MYA-2876) (Yeast).